A 201-amino-acid polypeptide reads, in one-letter code: MSRYRGPRFKKIRRLGALPGLTNKRPRAGSDLRNQSRSGKKSQYRIRLEEKQKLRFHYGLTERQLLKYVRIAGKAKGSTGQVLLQLLEMRLDNILFRLGMAPTIPGARQLVNHRHILVNGRIVDIPSYRCKPRDTIAARDEQKSKVLIQNSLDSSPHEELPNHLTLQPFQYKGLVNQIIDSKWVGLKINELLVVEYYSRQT.

The interval 15–44 (LGALPGLTNKRPRAGSDLRNQSRSGKKSQY) is disordered. Residues 89–150 (MRLDNILFRL…EQKSKVLIQN (62 aa)) enclose the S4 RNA-binding domain.

This sequence belongs to the universal ribosomal protein uS4 family. In terms of assembly, part of the 30S ribosomal subunit. Contacts protein S5. The interaction surface between S4 and S5 is involved in control of translational fidelity.

Its subcellular location is the plastid. The protein resides in the chloroplast. One of the primary rRNA binding proteins, it binds directly to 16S rRNA where it nucleates assembly of the body of the 30S subunit. Functionally, with S5 and S12 plays an important role in translational accuracy. The sequence is that of Small ribosomal subunit protein uS4c (rps4) from Lactuca sativa (Garden lettuce).